The following is a 304-amino-acid chain: Uricase (304 aa).

At alanine 2 the chain carries N-acetylalanine. Lysine 10 and lysine 23 each carry N6-acetyllysine; alternate. N6-succinyllysine; alternate is present on residues lysine 10 and lysine 23. Lysine 23 (charge relay system) is an active-site residue. An N6-acetyllysine mark is found at lysine 27 and lysine 36. Residues serine 39 and serine 63 each carry the phosphoserine modification. The active-site Charge relay system is the threonine 68. Urate-binding residues include threonine 68 and aspartate 69. N6-acetyllysine is present on residues lysine 118, lysine 122, and lysine 164. Phenylalanine 170 provides a ligand contact to urate. An N6-acetyllysine mark is found at lysine 175 and lysine 185. Residue arginine 187 coordinates urate. 2 positions are modified to N6-acetyllysine; alternate: lysine 221 and lysine 228. N6-succinyllysine; alternate occurs at positions 221 and 228. Position 232 is a phosphoserine (serine 232). Positions 235, 236, and 262 each coordinate urate. Histidine 264 functions as the Charge relay system in the catalytic mechanism. Lysine 278 carries the N6-acetyllysine modification. Tyrosine 289 carries the post-translational modification Phosphotyrosine. Positions 302–304 (SRL) match the Microbody targeting signal motif.

It belongs to the uricase family.

The protein localises to the peroxisome. The catalysed reaction is urate + O2 + H2O = 5-hydroxyisourate + H2O2. It participates in purine metabolism; urate degradation; (S)-allantoin from urate: step 1/3. Functionally, catalyzes the oxidation of uric acid to 5-hydroxyisourate, which is further processed to form (S)-allantoin. This is Uricase (UOX) from Macaca fascicularis (Crab-eating macaque).